The following is a 388-amino-acid chain: Protochlorophyllide reductase A, chloroplastic (388 aa).

Residues 1–74 (MALQLLPSTL…KPSGKKTLRQ (74 aa)) constitute a chloroplast transit peptide.

This sequence belongs to the short-chain dehydrogenases/reductases (SDR) family. POR subfamily.

It localises to the plastid. The protein localises to the chloroplast. The enzyme catalyses chlorophyllide a + NADP(+) = protochlorophyllide a + NADPH + H(+). It participates in porphyrin-containing compound metabolism; chlorophyll biosynthesis. Functionally, phototransformation of protochlorophyllide (Pchlide) to chlorophyllide (Chlide). The protein is Protochlorophyllide reductase A, chloroplastic (PORA) of Triticum aestivum (Wheat).